The chain runs to 358 residues: Transcription factor bHLH67 (358 aa).

Positions Asn125 to Gln176 are disordered. Residues Thr127 to Ser137 show a composition bias toward low complexity. Over residues Glu157 to Pro166 the composition is skewed to basic residues. Residues Asn175–Leu226 enclose the bHLH domain.

Homodimer. Expressed constitutively in roots, leaves, stems, and flowers.

Its subcellular location is the nucleus. The protein is Transcription factor bHLH67 (BHLH67) of Arabidopsis thaliana (Mouse-ear cress).